The primary structure comprises 25 residues: Ocellatin-F1 (25 aa).

L25 carries the post-translational modification Leucine amide.

This sequence belongs to the frog skin active peptide (FSAP) family. Ocellatin subfamily. In terms of tissue distribution, expressed by the skin glands.

It localises to the secreted. Functionally, antibacterial peptide that inhibits reference strains of both Gram-negative bacteria (E.coli, P.aeruginosa, E.cloacae, K.pneumoniae, and A.actinomycetemcomitans) and Gram-positive bacteria (S.aureus) with relatively low potencies (MIC=25-400 uM). Shows antifungal activity against C.lusitaniae (MIC=50.25 uM), but no activity against C.albicans. In the presence of an alkaloid (bufotenine), inhibits cellular infection by the rabies virus. The peptide shows very low hemolytic activity against rabbit erythrocytes. The low amphipathicity of alpha-helices demonstrated by wheel projection as well as the low cationicity may explain the low antibacterial and hemolytic potencies. The polypeptide is Ocellatin-F1 (Leptodactylus labyrinthicus (Labyrinth frog)).